Reading from the N-terminus, the 1489-residue chain is Calmodulin-regulated spectrin-associated protein 2 (1489 aa).

The region spanning 222–335 (WKLVPARYRK…FMAELFWWFE (114 aa)) is the Calponin-homology (CH) domain. The tract at residues 375–415 (SSDFPSSGEGATFTQSHHHLPSRYSRPQAHSSASGGIRRSS) is disordered. A compositionally biased stretch (low complexity) spans 405-415 (SSASGGIRRSS). Phosphoserine occurs at positions 416 and 418. The residue at position 426 (Thr-426) is a Phosphothreonine. A phosphoserine mark is found at Ser-464, Ser-598, Ser-599, Ser-611, and Ser-673. Disordered regions lie at residues 611-639 (SPIT…EDSS) and 668-730 (TREA…GSEL). Residues 668-679 (TREALSPCPSTV) are compositionally biased toward polar residues. Thr-678 carries the phosphothreonine modification. Position 680 is a phosphoserine (Ser-680). A compositionally biased stretch (low complexity) spans 680–699 (STKSQPGSSASSSSGVKMTS). Residues 703–713 (QKFRKLNHTDG) show a composition bias toward basic and acidic residues. Positions 756-793 (LLASEMVHLRMKLEEKRRAIEAQKKKMEAAFTKQRQKM) form a coiled coil. The interval 812–844 (LREEAAGAEDEKVYTDRAKEKESQKTDGQRSKS) is disordered. Ser-862 carries the post-translational modification Phosphoserine. Residues 887–926 (EILEYTKSIEKLNSSLHFLQQEMQRLSLQQEMLMQMREQQ) adopt a coiled-coil conformation. The tract at residues 922 to 1034 (MREQQSWVIS…IQTRSFVCFG (113 aa)) is MBD region. Positions 925–1017 (QQSWVISPPQ…SVDSLPRLRR (93 aa)) are disordered. Ser-931 and Ser-936 each carry phosphoserine. The span at 960–989 (SSDSPRPTHPSPQSSNRKSASFSVKSQRTP) shows a compositional bias: polar residues. Thr-997, Thr-1002, and Thr-1004 each carry phosphothreonine. Ser-1008 and Ser-1019 each carry phosphoserine. 3 disordered regions span residues 1032 to 1078 (CFGD…PFES), 1096 to 1152 (PNED…DKEQ), and 1191 to 1349 (KETQ…EYTG). Residues 1039-1075 (PQLKESKPKEEVKKEELESKGTLEQRGHNPEEKEIKP) are compositionally biased toward basic and acidic residues. The segment covering 1105 to 1117 (TEPPPKPVFPPTA) has biased composition (pro residues). Basic and acidic residues-rich tracts occupy residues 1132-1152 (KPPE…DKEQ) and 1191-1252 (KETQ…DTVI). A Phosphoserine modification is found at Ser-1148. Positions 1166-1238 (KDDQKAENDM…REFIRQEYMR (73 aa)) form a coiled coil. Over residues 1287–1299 (SSLSLASLNTGDN) the composition is skewed to polar residues. Ser-1313, Ser-1319, and Ser-1321 each carry phosphoserine. Over residues 1334–1346 (NASTTSSVASGTE) the composition is skewed to polar residues. Positions 1349–1483 (GPKLYKEPSA…QTKRPVTPKK (135 aa)) constitute a CKK domain.

It belongs to the CAMSAP1 family. Interacts with CAMSAP3. Interacts with KATNA1 and KATNB1; leading to regulate the length of CAMSAP2-decorated microtubule stretches. Interacts with a complex formed by AKAP9 and PDE4DIP isoform 13/MMG8/SMYLE, which recruits CAMSAP2 to the Golgi. Interacts with MAPRE1/EB1.

The protein resides in the cytoplasm. The protein localises to the cytoskeleton. It is found in the golgi apparatus. Its subcellular location is the cilium basal body. In terms of biological role, key microtubule-organizing protein that specifically binds the minus-end of non-centrosomal microtubules and regulates their dynamics and organization. Specifically recognizes growing microtubule minus-ends and autonomously decorates and stabilizes microtubule lattice formed by microtubule minus-end polymerization. Acts on free microtubule minus-ends that are not capped by microtubule-nucleating proteins or other factors and protects microtubule minus-ends from depolymerization. In addition, it also reduces the velocity of microtubule polymerization. Through the microtubule cytoskeleton, also regulates the organization of cellular organelles including the Golgi and the early endosomes. Essential for the tethering, but not for nucleation of non-centrosomal microtubules at the Golgi: together with Golgi-associated proteins AKAP9 and PDE4DIP, required to tether non-centrosomal minus-end microtubules to the Golgi, an important step for polarized cell movement. Also acts as a regulator of neuronal polarity and development: localizes to non-centrosomal microtubule minus-ends in neurons and stabilizes non-centrosomal microtubules, which is required for neuronal polarity, axon specification and dendritic branch formation. Through the microtubule cytoskeleton, regulates the autophagosome transport. The polypeptide is Calmodulin-regulated spectrin-associated protein 2 (Homo sapiens (Human)).